Consider the following 122-residue polypeptide: Large ribosomal subunit protein uL14 (122 aa).

The protein belongs to the universal ribosomal protein uL14 family. Part of the 50S ribosomal subunit. Forms a cluster with proteins L3 and L19. In the 70S ribosome, L14 and L19 interact and together make contacts with the 16S rRNA in bridges B5 and B8.

Its function is as follows. Binds to 23S rRNA. Forms part of two intersubunit bridges in the 70S ribosome. The sequence is that of Large ribosomal subunit protein uL14 from Marinobacter nauticus (strain ATCC 700491 / DSM 11845 / VT8) (Marinobacter aquaeolei).